Reading from the N-terminus, the 244-residue chain is 5-oxoprolinase subunit A (244 aa).

Belongs to the LamB/PxpA family. Forms a complex composed of PxpA, PxpB and PxpC.

It carries out the reaction 5-oxo-L-proline + ATP + 2 H2O = L-glutamate + ADP + phosphate + H(+). Its function is as follows. Catalyzes the cleavage of 5-oxoproline to form L-glutamate coupled to the hydrolysis of ATP to ADP and inorganic phosphate. The polypeptide is 5-oxoprolinase subunit A (Escherichia coli O6:K15:H31 (strain 536 / UPEC)).